Here is a 316-residue protein sequence, read N- to C-terminus: Ribose-phosphate pyrophosphokinase (316 aa).

ATP contacts are provided by residues 37–39 (DGE) and 96–97 (RQ). Mg(2+) is bound by residues His130 and Asp171. Lys194 is a catalytic residue. D-ribose 5-phosphate is bound by residues Arg196 and Asp221.

Belongs to the ribose-phosphate pyrophosphokinase family. Class I subfamily. Homohexamer. Requires Mg(2+) as cofactor.

The protein resides in the cytoplasm. It carries out the reaction D-ribose 5-phosphate + ATP = 5-phospho-alpha-D-ribose 1-diphosphate + AMP + H(+). Its pathway is metabolic intermediate biosynthesis; 5-phospho-alpha-D-ribose 1-diphosphate biosynthesis; 5-phospho-alpha-D-ribose 1-diphosphate from D-ribose 5-phosphate (route I): step 1/1. In terms of biological role, involved in the biosynthesis of the central metabolite phospho-alpha-D-ribosyl-1-pyrophosphate (PRPP) via the transfer of pyrophosphoryl group from ATP to 1-hydroxyl of ribose-5-phosphate (Rib-5-P). This Rhodopirellula baltica (strain DSM 10527 / NCIMB 13988 / SH1) protein is Ribose-phosphate pyrophosphokinase.